We begin with the raw amino-acid sequence, 766 residues long: Phosphoribosylformylglycinamidine synthase subunit PurL (766 aa).

Residue His46 is part of the active site. 2 residues coordinate ATP: Tyr49 and Lys88. Mg(2+) is bound at residue Glu90. Residues 91–94 (SHNH) and Arg113 contribute to the substrate site. His92 serves as the catalytic Proton acceptor. Residue Asp114 coordinates Mg(2+). Gln237 contacts substrate. Asp265 lines the Mg(2+) pocket. 309 to 311 (ESQ) provides a ligand contact to substrate. Asp520 and Gly557 together coordinate ATP. A Mg(2+)-binding site is contributed by Asn558. Ser560 provides a ligand contact to substrate.

Belongs to the FGAMS family. Monomer. Part of the FGAM synthase complex composed of 1 PurL, 1 PurQ and 2 PurS subunits.

It localises to the cytoplasm. It catalyses the reaction N(2)-formyl-N(1)-(5-phospho-beta-D-ribosyl)glycinamide + L-glutamine + ATP + H2O = 2-formamido-N(1)-(5-O-phospho-beta-D-ribosyl)acetamidine + L-glutamate + ADP + phosphate + H(+). The protein operates within purine metabolism; IMP biosynthesis via de novo pathway; 5-amino-1-(5-phospho-D-ribosyl)imidazole from N(2)-formyl-N(1)-(5-phospho-D-ribosyl)glycinamide: step 1/2. Its function is as follows. Part of the phosphoribosylformylglycinamidine synthase complex involved in the purines biosynthetic pathway. Catalyzes the ATP-dependent conversion of formylglycinamide ribonucleotide (FGAR) and glutamine to yield formylglycinamidine ribonucleotide (FGAM) and glutamate. The FGAM synthase complex is composed of three subunits. PurQ produces an ammonia molecule by converting glutamine to glutamate. PurL transfers the ammonia molecule to FGAR to form FGAM in an ATP-dependent manner. PurS interacts with PurQ and PurL and is thought to assist in the transfer of the ammonia molecule from PurQ to PurL. This chain is Phosphoribosylformylglycinamidine synthase subunit PurL, found in Synechococcus sp. (strain JA-3-3Ab) (Cyanobacteria bacterium Yellowstone A-Prime).